A 110-amino-acid polypeptide reads, in one-letter code: U-scoloptoxin(16)-Er7a (110 aa).

The signal sequence occupies residues 1–26 (MTSTRKLSVSCLIVFMVSSLIAVSSG).

This sequence belongs to the scoloptoxin-16 family. Post-translationally, contains 4 disulfide bonds. Expressed by the venom gland.

It localises to the secreted. In Ethmostigmus rubripes (Giant centipede), this protein is U-scoloptoxin(16)-Er7a.